Reading from the N-terminus, the 864-residue chain is Ribosome biogenesis protein ERB1 (864 aa).

Basic and acidic residues predominate over residues 1–52; that stretch reads MAVDKGRRPVPPERRAQGRKRAEPGDVTIRETRTRPVHTPEPEPELLAKDGI. Disordered stretches follow at residues 1–153 and 191–231; these read MAVD…VKEG and ESRN…STED. Positions 53–71 are enriched in acidic residues; sequence LELEDDDDNDDDDDDDDDD. Residues 72 to 83 show a composition bias toward basic and acidic residues; it reads KSNHHDGAPKNE. The span at 100–135 shows a compositional bias: acidic residues; it reads DDGDEDEEEDDEDEDEDASDDEAFDSDDLENWDEEA. WD repeat units lie at residues 509 to 549, 559 to 599, 694 to 732, 735 to 774, 778 to 817, and 833 to 864; these read AHAP…CVAT, ADRS…KTMY, NSAM…LVKT, PGVR…RPYK, YHSR…DLLQ, and QDAL…LWTP.

Belongs to the WD repeat BOP1/ERB1 family. Component of the NOP7 complex, composed of ERB1, NOP7 and YTM1. The complex is held together by ERB1, which interacts with NOP7 via its N-terminal domain and with YTM1 via a high-affinity interaction between the seven-bladed beta-propeller domains of the 2 proteins. The NOP7 complex associates with the 66S pre-ribosome.

The protein resides in the nucleus. The protein localises to the nucleolus. It localises to the nucleoplasm. Its function is as follows. Component of the NOP7 complex, which is required for maturation of the 25S and 5.8S ribosomal RNAs and formation of the 60S ribosome. The polypeptide is Ribosome biogenesis protein ERB1 (Malassezia globosa (strain ATCC MYA-4612 / CBS 7966) (Dandruff-associated fungus)).